The primary structure comprises 85 residues: UPF0473 protein CPR_1590 (85 aa).

The protein belongs to the UPF0473 family.

This is UPF0473 protein CPR_1590 from Clostridium perfringens (strain SM101 / Type A).